Reading from the N-terminus, the 323-residue chain is Putative CRISPR-associated protein SSO1401 (323 aa).

Sometimes seen associated with the aCascade ribonucleoprotein complex, minimally composed of Csa2 and Cas5a, which binds crRNA. Other probable components of aCascade in strain P1 are Cas6 and Csa5, while SSO1399, Cas5b (SSO1400) and SSO1401 have sometimes been seen weakly associated. The Csa2-Cas5a-crRNA complex also binds target DNA homologous to crRNA, probably forming an R-loop. Purified aCascade forms a filament about 6 nm in width.

In terms of biological role, CRISPR (clustered regularly interspaced short palindromic repeat) is an adaptive immune system that provides protection against mobile genetic elements (viruses, transposable elements and conjugative plasmids). CRISPR clusters contain spacers, sequences complementary to antecedent mobile elements, and target invading nucleic acids. CRISPR clusters are transcribed and processed into CRISPR RNA (crRNA). This chain is Putative CRISPR-associated protein SSO1401, found in Saccharolobus solfataricus (strain ATCC 35092 / DSM 1617 / JCM 11322 / P2) (Sulfolobus solfataricus).